Reading from the N-terminus, the 2563-residue chain is Compactin diketide synthase mlcB (2563 aa).

In terms of domain architecture, Ketosynthase family 3 (KS3) spans 29–450; it reads STPIAIVGMG…GSNAHVILES (422 aa). Catalysis depends on for beta-ketoacyl synthase activity residues cysteine 202, histidine 337, and histidine 372. The segment at 568-915 is acyl and malonyl transferase; that stretch reads VFTGQGAQWH…TELISKGYGL (348 aa). The active-site For malonyltransferase activity is serine 658. The segment covering 951 to 960 has biased composition (basic and acidic residues); sequence EPRGSRESKQ. The segment at 951–971 is disordered; it reads EPRGSRESKQRTHPPHTLIGS. The segment at 966 to 1103 is N-terminal hotdog fold; sequence HTLIGSRESL…GLIRSESERS (138 aa). The region spanning 966 to 1284 is the PKS/mFAS DH domain; sequence HTLIGSRESL…FQSVGSSFSD (319 aa). Histidine 998 functions as the Proton acceptor; for dehydratase activity in the catalytic mechanism. A dehydratase-like region spans residues 998 to 1010; it reads HVVGSSIIFPGAG. The interval 1121 to 1284 is C-terminal hotdog fold; it reads DNRSIDPNDL…FQSVGSSFSD (164 aa). Aspartate 1187 serves as the catalytic Proton donor; for dehydratase activity. Residues 1542 to 1579 form a methyltransferase region; that stretch reads YDVVVACQVLHATRCMKRTLSNVRKLLKPGGNLILVET. The Carrier domain occupies 2485 to 2562; the sequence is EAISIVLKAM…GLVELVVAKC (78 aa). Serine 2522 carries the O-(pantetheine 4'-phosphoryl)serine modification.

Pantetheine 4'-phosphate is required as a cofactor.

It carries out the reaction holo-[2-methylbutanoate polyketide synthase] + 2 malonyl-CoA + S-adenosyl-L-methionine + 2 NADPH + 3 H(+) = (S)-2-methylbutanoyl-[2-methylbutanoate polyketide synthase] + S-adenosyl-L-homocysteine + 2 CO2 + 2 NADP(+) + 2 CoA + H2O. It functions in the pathway polyketide biosynthesis. Diketide synthase; part of the gene cluster that mediates the biosynthesis of compactin, also known as mevastatin or ML-236B, and which acts as a potent competitive inhibitor of HMG-CoA reductase. Compactin biosynthesis is performed in two stages. The first stage is catalyzed by the nonaketide synthase mlcA, which belongs to type I polyketide synthases and catalyzes the iterative nine-step formation of the polyketide. This PKS stage is completed by the action of dehydrogenase mlcG, which catalyzes the NADPH-dependent reduction of the unsaturated tetra-, penta- and heptaketide intermediates that arise during the mlcA-mediated biosynthesis of the nonaketide chain and leads to dihydro-ML-236C carboxylate. Covalently bound dihydro-ML-236C carboxylate is released from mlcA by the mlcF esterase. Conversion of dihydro-ML-236C carboxylate into ML-236A carboxylate is subsequently performed with the participation of molecular oxygen and P450 monoogygenase mlcC. Finally, mlcH performs the conversion of ML-236A carboxylate to ML-236B/compactin carboxylate through the addition of the side-chain diketide moiety produced by the diketide synthase mlcB. In Penicillium citrinum, this protein is Compactin diketide synthase mlcB (mlcB).